The primary structure comprises 908 residues: 3-phosphoinositide-dependent protein kinase B (908 aa).

Low complexity-rich tracts occupy residues 53–170 (NNNF…SSSL), 179–189 (YSDSSDSIDSY), and 200–216 (QQQQHLQQQQDQPQPLH). Residues 53–267 (NNNFNNNNNN…PNSSIPHKKS (215 aa)) form a disordered region. The segment covering 250–262 (KTSSFGLQPNSSI) has biased composition (polar residues). The 257-residue stretch at 271-527 (FDFIRTIGKG…ISEIKNHEFF (257 aa)) folds into the Protein kinase domain. Residues 281-283 (AYG) and Lys300 contribute to the ATP site. Positions 302-346 (LNKKLIIKEKKAKYVNTEKTILDSLDNPNIVKLFYTFQDENNLYF) are PIF-pocket. Residues 349–351 (EYC) and Asp355 each bind ATP. The Proton acceptor role is filled by Asp394. Residues Glu398 and Asp412 each contribute to the ATP site. 2 disordered regions span residues 538-560 (SQTPPPIEQMVPQSPFPSPNSSL) and 606-755 (ISNN…KNLQ). The segment covering 607–684 (SNNNNNNNNT…PAYSSTPSST (78 aa)) has biased composition (low complexity). Residues 696–709 (SSCSSNNLLGKSSN) are compositionally biased toward polar residues. The span at 710-741 (QQYQPFQFHQQQQQQQQQQQRERSSTTTPSPT) shows a compositional bias: low complexity. Positions 764-902 (SSFSTSSPMS…KLWVDLINEL (139 aa)) constitute a PH domain.

The protein belongs to the protein kinase superfamily. AGC Ser/Thr protein kinase family. PDPK1 subfamily.

It carries out the reaction L-seryl-[protein] + ATP = O-phospho-L-seryl-[protein] + ADP + H(+). The catalysed reaction is L-threonyl-[protein] + ATP = O-phospho-L-threonyl-[protein] + ADP + H(+). The polypeptide is 3-phosphoinositide-dependent protein kinase B (pdkB) (Dictyostelium discoideum (Social amoeba)).